Consider the following 328-residue polypeptide: V-type sodium ATPase subunit C (328 aa).

The protein belongs to the V-ATPase V0D/AC39 subunit family.

Functionally, involved in ATP-driven sodium extrusion. This is V-type sodium ATPase subunit C (ntpC) from Enterococcus hirae (strain ATCC 9790 / DSM 20160 / JCM 8729 / LMG 6399 / NBRC 3181 / NCIMB 6459 / NCDO 1258 / NCTC 12367 / WDCM 00089 / R).